A 150-amino-acid polypeptide reads, in one-letter code: Transcriptional repressor NrdR (150 aa).

A zinc finger lies at 3–34 (CPFCAHPDSKVVDSRPDKGGAAIRRRRECESC). Residues 49-139 (PLVLKKDGRR…VYRSFKDVNE (91 aa)) form the ATP-cone domain.

This sequence belongs to the NrdR family. Requires Zn(2+) as cofactor.

Functionally, negatively regulates transcription of bacterial ribonucleotide reductase nrd genes and operons by binding to NrdR-boxes. The protein is Transcriptional repressor NrdR of Geobacter metallireducens (strain ATCC 53774 / DSM 7210 / GS-15).